Consider the following 436-residue polypeptide: Chromosomal replication initiator protein DnaA (436 aa).

The interval 1 to 69 (MSIFTKIKKS…SELYEKETGI (69 aa)) is domain I, interacts with DnaA modulators. Positions 69–97 (IKPKIDIVTKEISHRPLTIEEIIEPTTPS) are domain II. The tract at residues 98–311 (VLIPEYTFES…GMITKINAMS (214 aa)) is domain III, AAA+ region. ATP contacts are provided by G142, G144, K145, and T146. The domain IV, binds dsDNA stretch occupies residues 312–436 (KILGISEITL…KNKIQIKKSE (125 aa)).

The protein belongs to the DnaA family. As to quaternary structure, oligomerizes as a right-handed, spiral filament on DNA at oriC.

The protein localises to the cytoplasm. In terms of biological role, plays an essential role in the initiation and regulation of chromosomal replication. ATP-DnaA binds to the origin of replication (oriC) to initiate formation of the DNA replication initiation complex once per cell cycle. Binds the DnaA box (a 9 base pair repeat at the origin) and separates the double-stranded (ds)DNA. Forms a right-handed helical filament on oriC DNA; dsDNA binds to the exterior of the filament while single-stranded (ss)DNA is stabiized in the filament's interior. The ATP-DnaA-oriC complex binds and stabilizes one strand of the AT-rich DNA unwinding element (DUE), permitting loading of DNA polymerase. After initiation quickly degrades to an ADP-DnaA complex that is not apt for DNA replication. Binds acidic phospholipids. The chain is Chromosomal replication initiator protein DnaA from Nautilia profundicola (strain ATCC BAA-1463 / DSM 18972 / AmH).